A 734-amino-acid polypeptide reads, in one-letter code: MAAAAAIAAALLRRSTSSQHHRRILLLPLLSHLQRAAPRSPSPWDPPPHHRFFFSSDVTAEGDSKPRPPLDGKQLWREVSTSEPATGASRLPKATWDAVVALLRRFGKDPAMSDQALALYIPASAFPTYARRFRHFLPARLSLESAEHLLSLPADDAHALLLPAFAEFCVTHLADELRKHESVMAAADLTAPHAWYPFARAMRRRVVYHCGPTNSGKTHNALTRFAAAKSGVYCSPLRLLAMEVFDKVNALGVYCSLRTGQEIKEVPFSNHVACTIEMLSTEEPYEVAVVDEIQMMADPVRGYAWTRAVLGLKADEIHLCGDPSVLKIVRKICADTGDDLEVHQYERFKPLVVEAKTLLGDLKNVRSGDCIVAFSRREIFEVKLAIEKFTKHKCCVIYGALPPETRRQQAKLFNEQDNEYDVLVASDAVGMGLNLNIRRVVFYSLAKYNGDRMVPVAASQVKQIAGRAGRRGSIYPDGLTTTFLLDDLDYLIQCLQQPFEEAKKVGLFPCFEQVESFAIQFPDLTFNELLDKFRENCRVDSTYFMCHQESIKKVANMLERIQGLSLKDRYNFCFAPVNIRDPKAMYHLLRFATNYSQSRRVSIAMGMPKGSAKNDTELLDLETKHQVLSMYLWLSHHFEEDHFPHVQKAEEMSINIADLLAKSLAKASWKPTSRQQAKPRRENEEDNDVEQASDDNAKNDSEDGYERSISRIKPFMRKRLDRPSQDPSSLNFVA.

Residues 1–60 (MAAAAAIAAALLRRSTSSQHHRRILLLPLLSHLQRAAPRSPSPWDPPPHHRFFFSSDVTA) constitute a mitochondrion transit peptide. The segment at 58–88 (VTAEGDSKPRPPLDGKQLWREVSTSEPATGA) is disordered. The span at 62–76 (GDSKPRPPLDGKQLW) shows a compositional bias: basic and acidic residues. Residues 198-356 (FARAMRRRVV…RFKPLVVEAK (159 aa)) enclose the Helicase ATP-binding domain. 211–218 (GPTNSGKT) is a binding site for ATP. Residues 357 to 525 (TLLGDLKNVR…SFAIQFPDLT (169 aa)) enclose the Helicase C-terminal domain. 2 N-linked (GlcNAc...) asparagine glycosylation sites follow: Asn-594 and Asn-614. The disordered stretch occupies residues 667 to 734 (ASWKPTSRQQ…QDPSSLNFVA (68 aa)). Positions 684–693 (EEDNDVEQAS) are enriched in acidic residues. Residues 695–709 (DNAKNDSEDGYERSI) are compositionally biased toward basic and acidic residues. An N-linked (GlcNAc...) asparagine glycan is attached at Asn-699. Residues 725–734 (QDPSSLNFVA) show a composition bias toward polar residues.

It belongs to the helicase family. Homodimer; in free form. Component of the mitochondrial degradosome (mtEXO) complex which is a heteropentamer containing 2 copies of SUPV3L1 and 3 copies of PNPT1. It depends on Mg(2+) as a cofactor. Requires Mn(2+) as cofactor.

The protein resides in the nucleus. It is found in the mitochondrion matrix. Its subcellular location is the mitochondrion nucleoid. It carries out the reaction ATP + H2O = ADP + phosphate + H(+). Functionally, major helicase player in mitochondrial RNA metabolism. Component of the mitochondrial degradosome (mtEXO) complex, that degrades 3' overhang double-stranded RNA with a 3'-to-5' directionality in an ATP-dependent manner. ATPase and ATP-dependent multisubstrate helicase, able to unwind double-stranded (ds) DNA and RNA, and RNA/DNA heteroduplexes in the 5'-to-3' direction. Plays a role in the RNA surveillance system in mitochondria; regulates the stability of mature mRNAs, the removal of aberrantly formed mRNAs and the rapid degradation of non coding processing intermediates. Confers salinity and drought stress tolerances by maintaining both photosynthesis and antioxidant machinery, probably via an increase in plant hormones levels such as gibberellic acid (GA(3)), the cytokinin zeatin (Z) and indole-3-acetic acid (IAA). In Oryza sativa subsp. japonica (Rice), this protein is ATP-dependent RNA helicase SUV3L, mitochondrial.